The primary structure comprises 675 residues: DNA ligase (675 aa).

NAD(+) is bound by residues 35-39 (DAVYD), 84-85 (SL), and E118. The N6-AMP-lysine intermediate role is filled by K120. 4 residues coordinate NAD(+): R141, E178, K295, and K319. Residues C413, C416, C431, and C436 each contribute to the Zn(2+) site. In terms of domain architecture, BRCT spans 598 to 675 (GAIGALTGQT…DEAELKALLS (78 aa)).

This sequence belongs to the NAD-dependent DNA ligase family. LigA subfamily. The cofactor is Mg(2+). Mn(2+) is required as a cofactor.

The catalysed reaction is NAD(+) + (deoxyribonucleotide)n-3'-hydroxyl + 5'-phospho-(deoxyribonucleotide)m = (deoxyribonucleotide)n+m + AMP + beta-nicotinamide D-nucleotide.. In terms of biological role, DNA ligase that catalyzes the formation of phosphodiester linkages between 5'-phosphoryl and 3'-hydroxyl groups in double-stranded DNA using NAD as a coenzyme and as the energy source for the reaction. It is essential for DNA replication and repair of damaged DNA. The polypeptide is DNA ligase (Synechococcus sp. (strain RCC307)).